The chain runs to 843 residues: Glycogen phosphorylase, muscle form (843 aa).

Serine 2 is modified (N-acetylserine). At serine 15 the chain carries Phosphoserine; by PHK; in form phosphorylase A. Aspartate 43 and tyrosine 76 together coordinate AMP. Phosphotyrosine is present on residues tyrosine 204 and tyrosine 227. 310-319 (RRFKSSKFGC) provides a ligand contact to AMP. Serine 430 carries the phosphoserine modification. At tyrosine 473 the chain carries Phosphotyrosine. Position 514 is a phosphoserine (serine 514). Lysine 681 is modified (N6-(pyridoxal phosphate)lysine). Residues serine 747 and serine 748 each carry the phosphoserine modification.

Belongs to the glycogen phosphorylase family. In terms of assembly, homodimer. Homotetramer; to form the enzymatically active phosphorylase A. Requires pyridoxal 5'-phosphate as cofactor. Post-translationally, phosphorylation of Ser-15 converts phosphorylase B (unphosphorylated) to phosphorylase A.

It carries out the reaction [(1-&gt;4)-alpha-D-glucosyl](n) + phosphate = [(1-&gt;4)-alpha-D-glucosyl](n-1) + alpha-D-glucose 1-phosphate. Allosterically regulated through the non-covalent binding of metabolites, being activated by AMP and inhibited by ATP, ADP, and glucose-6-phosphate. The activity is also controlled by post-translational modifications including phosphorylation. Allosteric enzyme that catalyzes the rate-limiting step in glycogen catabolism, the phosphorolytic cleavage of glycogen to produce glucose-1-phosphate, and plays a central role in maintaining cellular and organismal glucose homeostasis. The chain is Glycogen phosphorylase, muscle form from Oryctolagus cuniculus (Rabbit).